The sequence spans 206 residues: MISKKKSNSSNRWLSEHFQDQYVKEAKKQKIRSRSWFKLEEIDKNNRLFKPGMNVLDLGSSPGGWSQYAAKKIGKKGYILACDILPMKKIKGVDFFQGDFCNKKTLNLILTNLSNVNLNLIMSDMAPNITGCSSIDMPRIIEICKTVFTISDHVLSRNGVVLVKSFQGEGFNEFFAQMKNLFSKIKICKPKTSRSRSREIFMLATR.

S-adenosyl-L-methionine is bound by residues Gly-63, Trp-65, Asp-83, Asp-99, and Asp-124. Lys-164 functions as the Proton acceptor in the catalytic mechanism.

Belongs to the class I-like SAM-binding methyltransferase superfamily. RNA methyltransferase RlmE family.

The protein localises to the cytoplasm. The catalysed reaction is uridine(2552) in 23S rRNA + S-adenosyl-L-methionine = 2'-O-methyluridine(2552) in 23S rRNA + S-adenosyl-L-homocysteine + H(+). In terms of biological role, specifically methylates the uridine in position 2552 of 23S rRNA at the 2'-O position of the ribose in the fully assembled 50S ribosomal subunit. This chain is Ribosomal RNA large subunit methyltransferase E, found in Buchnera aphidicola subsp. Schizaphis graminum (strain Sg).